The following is a 454-amino-acid chain: LETM1 domain-containing protein YLH47, mitochondrial (454 aa).

Residues 1–45 (MLKYRSLPIKRAIHHPAPGITPISPRIMVSRLRVIPSFNLKFNRW) constitute a mitochondrion transit peptide. Residues 46 to 136 (NSSVPESSKK…LKRTTQDIVR (91 aa)) lie on the Mitochondrial intermembrane side of the membrane. Residues 51–73 (ESSKKELKTTDGNQESASKVSPV) form a disordered region. A helical membrane pass occupies residues 137 to 157 (LVPFAAFLIIPFAELLLPFAL). Over 158–454 (KLFPNLLPST…IGEAAAIKEK (297 aa)) the chain is Mitochondrial matrix. The region spanning 177–371 (KLENLRNTRK…LCDVLIGIPD (195 aa)) is the Letm1 RBD domain. The stretch at 376–423 (EVKVNVVKEDEASAKQKLKQLREQEEIMKEEEQQEENAIVSVKDELSL) forms a coiled coil. Composition is skewed to basic and acidic residues over residues 420-430 (ELSLDDQDKNI) and 437-454 (VKPH…IKEK). The interval 420 to 454 (ELSLDDQDKNIDAAAPDVKPHDTKPIGEAAAIKEK) is disordered.

Associates with the mitochondrial ribosomes.

The protein resides in the mitochondrion inner membrane. Involved in mitochondrial potassium homeostasis through the mitochondrial K(+)/H(+) exchange regulation. This chain is LETM1 domain-containing protein YLH47, mitochondrial (YLH47), found in Saccharomyces cerevisiae (strain ATCC 204508 / S288c) (Baker's yeast).